The primary structure comprises 184 residues: Large ribosomal subunit protein uL6 (184 aa).

Belongs to the universal ribosomal protein uL6 family. In terms of assembly, part of the 50S ribosomal subunit.

Functionally, this protein binds to the 23S rRNA, and is important in its secondary structure. It is located near the subunit interface in the base of the L7/L12 stalk, and near the tRNA binding site of the peptidyltransferase center. This is Large ribosomal subunit protein uL6 from Fervidobacterium nodosum (strain ATCC 35602 / DSM 5306 / Rt17-B1).